Here is an 85-residue protein sequence, read N- to C-terminus: Beta-insect depressant toxin Lqh-dprIT3h (85 aa).

The signal sequence occupies residues 1 to 21 (MKLLLLLTISASMLIEGLVNA). Residues 22-82 (DGYIRGGDGC…EWDYETDTCG (61 aa)) enclose the LCN-type CS-alpha/beta domain. 4 disulfides stabilise this stretch: cysteine 31/cysteine 81, cysteine 35/cysteine 56, cysteine 42/cysteine 63, and cysteine 46/cysteine 65. The residue at position 82 (glycine 82) is a Glycine amide.

It belongs to the long (4 C-C) scorpion toxin superfamily. Sodium channel inhibitor family. Beta subfamily. Expressed by the venom gland.

It localises to the secreted. In terms of biological role, depressant insect beta-toxins cause a transient contraction paralysis followed by a slow flaccid paralysis. They bind voltage-independently at site-4 of sodium channels (Nav) and block action potentials, primarily by depolarizing the axonal membrane and suppressing the sodium current. This depressant toxin is active only on insects. It is found in a relatively small amount in the venom. The sequence is that of Beta-insect depressant toxin Lqh-dprIT3h from Leiurus hebraeus (Hebrew deathstalker scorpion).